The sequence spans 235 residues: Repeat element protein (235 aa).

A repeat element region spans residues 57–235; sequence IFQELLERLS…ARRKKCRFSQ (179 aa).

This is Repeat element protein from Campoletis sonorensis (CsIV).